The sequence spans 143 residues: MSRSGVAVADESLTAFNDLKLGKKYKFILFGLNDAKTEIVVKETSTDPSYDAFLEKLPENDCLYAIYDFEYEINGNEGKRSKIVFFTWSPDTAPVRSKMVYASSKDALRRALNGVSTDVQGTDFSEVSYDSVLERVSRGAGSH.

Residue serine 4 is modified to Phosphoserine. Residues 5–137 (GVAVADESLT…SYDSVLERVS (133 aa)) form the ADF-H domain.

Belongs to the actin-binding proteins ADF family. Interacts with actin and AIP1 in a ternary complex. The N-terminus is blocked.

It localises to the cytoplasm. It is found in the cytoskeleton. Its subcellular location is the nucleus matrix. Controls reversibly actin polymerization and depolymerization in a pH-sensitive manner. It has the ability to bind G- and F-actin in a 1:1 ratio of cofilin to actin. Binding to F-actin is regulated by tropomyosin. It is the major component of intranuclear and cytoplasmic actin rods. Required for accumulation of actin at the cell division site via depolymerizing actin at the cell ends. In association with myosin II has a role in the assembly of the contractile ring via severing actin filaments. Involved in the maintenance of the contractile ring once formed. In association with profilin and capping protein, has a role in the mitotic reorganization of the actin cytoskeleton. In effect, yeast cofilin increases the rate of actin polymerization by making new ends available for actin subunit addition. Such a protein complex is important for the polarized growth of yeast cells. The chain is Cofilin (COF1) from Saccharomyces cerevisiae (strain ATCC 204508 / S288c) (Baker's yeast).